Here is a 257-residue protein sequence, read N- to C-terminus: Transmembrane protein C257L (257 aa).

Transmembrane regions (helical) follow at residues 123–143 (LELL…FTAL) and 163–183 (MMIF…YVLV).

The protein belongs to the asfivirus C257R family.

It localises to the host membrane. It is found in the virion. This is Transmembrane protein C257L from Ornithodoros (relapsing fever ticks).